Reading from the N-terminus, the 255-residue chain is Hydroxyacylglutathione hydrolase (255 aa).

Histidine 53, histidine 55, aspartate 57, histidine 58, histidine 110, aspartate 127, and histidine 165 together coordinate Zn(2+).

This sequence belongs to the metallo-beta-lactamase superfamily. Glyoxalase II family. In terms of assembly, monomer. Zn(2+) serves as cofactor.

The enzyme catalyses an S-(2-hydroxyacyl)glutathione + H2O = a 2-hydroxy carboxylate + glutathione + H(+). It participates in secondary metabolite metabolism; methylglyoxal degradation; (R)-lactate from methylglyoxal: step 2/2. In terms of biological role, thiolesterase that catalyzes the hydrolysis of S-D-lactoyl-glutathione to form glutathione and D-lactic acid. This chain is Hydroxyacylglutathione hydrolase, found in Xanthomonas campestris pv. campestris (strain 8004).